The primary structure comprises 340 residues: GTP 3',8-cyclase (340 aa).

Positions 8 to 227 (KLGRPIRDLR…EMIEQNFDIE (220 aa)) constitute a Radical SAM core domain. Arginine 17 provides a ligand contact to GTP. Residues cysteine 24 and cysteine 28 each coordinate [4Fe-4S] cluster. Residue tyrosine 30 coordinates S-adenosyl-L-methionine. [4Fe-4S] cluster is bound at residue cysteine 31. Arginine 71 contributes to the GTP binding site. Glycine 75 is a binding site for S-adenosyl-L-methionine. A GTP-binding site is contributed by threonine 102. Serine 126 is an S-adenosyl-L-methionine binding site. Residue lysine 163 coordinates GTP. Position 197 (methionine 197) interacts with S-adenosyl-L-methionine. 2 residues coordinate [4Fe-4S] cluster: cysteine 261 and cysteine 264. Residue 266 to 268 (RAR) participates in GTP binding. Cysteine 278 contacts [4Fe-4S] cluster.

Belongs to the radical SAM superfamily. MoaA family. As to quaternary structure, monomer and homodimer. The cofactor is [4Fe-4S] cluster.

The catalysed reaction is GTP + AH2 + S-adenosyl-L-methionine = (8S)-3',8-cyclo-7,8-dihydroguanosine 5'-triphosphate + 5'-deoxyadenosine + L-methionine + A + H(+). It participates in cofactor biosynthesis; molybdopterin biosynthesis. Its function is as follows. Catalyzes the cyclization of GTP to (8S)-3',8-cyclo-7,8-dihydroguanosine 5'-triphosphate. This chain is GTP 3',8-cyclase, found in Staphylococcus saprophyticus subsp. saprophyticus (strain ATCC 15305 / DSM 20229 / NCIMB 8711 / NCTC 7292 / S-41).